A 79-amino-acid chain; its full sequence is D-alanyl carrier protein (79 aa).

The region spanning 1–77 is the Carrier domain; it reads MDIKAEVIEI…KIVEGVTELR (77 aa). An O-(pantetheine 4'-phosphoryl)serine modification is found at S35.

It belongs to the DltC family. In terms of processing, 4'-phosphopantetheine is transferred from CoA to a specific serine of apo-DCP.

The protein localises to the cytoplasm. Its pathway is cell wall biogenesis; lipoteichoic acid biosynthesis. Functionally, carrier protein involved in the D-alanylation of lipoteichoic acid (LTA). The loading of thioester-linked D-alanine onto DltC is catalyzed by D-alanine--D-alanyl carrier protein ligase DltA. The DltC-carried D-alanyl group is further transferred to cell membrane phosphatidylglycerol (PG) by forming an ester bond, probably catalyzed by DltD. D-alanylation of LTA plays an important role in modulating the properties of the cell wall in Gram-positive bacteria, influencing the net charge of the cell wall. This chain is D-alanyl carrier protein, found in Streptococcus sanguinis (strain SK36).